Here is a 346-residue protein sequence, read N- to C-terminus: Phosphoribosylformylglycinamidine cyclo-ligase (346 aa).

The protein belongs to the AIR synthase family.

Its subcellular location is the cytoplasm. The catalysed reaction is 2-formamido-N(1)-(5-O-phospho-beta-D-ribosyl)acetamidine + ATP = 5-amino-1-(5-phospho-beta-D-ribosyl)imidazole + ADP + phosphate + H(+). It participates in purine metabolism; IMP biosynthesis via de novo pathway; 5-amino-1-(5-phospho-D-ribosyl)imidazole from N(2)-formyl-N(1)-(5-phospho-D-ribosyl)glycinamide: step 2/2. This chain is Phosphoribosylformylglycinamidine cyclo-ligase, found in Bacillus pumilus (strain SAFR-032).